Consider the following 799-residue polypeptide: Cadherin-8 (799 aa).

Residues 1–29 form the signal peptide; that stretch reads MPERLAETLLDLWTPLIILWITLPSFVYM. A propeptide spanning residues 30-61 is cleaved from the precursor; it reads APMNQAHVLTTGSPLELSRQSEEMRILNRSKR. 5 consecutive Cadherin domains span residues 62–167, 168–276, 277–391, 392–494, and 495–616; these read GWVW…APEF, LNGP…PPKF, AQSL…PPVF, SSPT…DNAP, and EFAS…YVLP. The Extracellular segment spans residues 62 to 621; sequence GWVWNQMFVL…PYVLPIGLSM (560 aa). Residue Asn-188 is glycosylated (N-linked (GlcNAc...) asparagine). N-linked (GlcNAc...) asparagine glycosylation is found at Asn-463, Asn-473, and Asn-544. Residues 622–642 form a helical membrane-spanning segment; sequence GALIAILACIILLLVIVVLFV. Over 643–799 the chain is Cytoplasmic; the sequence is TLRRHKNEPL…YSVGESDKET (157 aa). A Phosphoserine modification is found at Ser-795.

The protein resides in the cell membrane. Functionally, cadherins are calcium-dependent cell adhesion proteins. They preferentially interact with themselves in a homophilic manner in connecting cells; cadherins may thus contribute to the sorting of heterogeneous cell types. The sequence is that of Cadherin-8 (Cdh8) from Rattus norvegicus (Rat).